We begin with the raw amino-acid sequence, 343 residues long: HTH-type transcriptional regulator GntR (343 aa).

In terms of domain architecture, HTH lacI-type spans 16–70 (PTLNEVARRAGVSPITASRALRGVASVAEELAQKVRDAARELGYVANPAARALAS). A DNA-binding region (H-T-H motif) is located at residues 18–37 (LNEVARRAGVSPITASRALR).

With respect to regulation, free GntR fails to recognize gluconate and 6-phosphogluconate, whereas the GntR/DNA complexes recognize both ligands. It is therefore likely that GntR DNA binding induces structural changes that permit GntR to recognize effectors. In terms of biological role, involved in the regulation of glucose metabolism. Represses its own expression as well as that of the gluconate permease GntP. It employs an effector mediated de-repression mechanism: in the absence of ligand, GntR binds to the gntR and gntP promoters and represses their expression. The release of promoter bound GntR is induced by gluconate and 6-phosphogluconate that bind with similar apparent affinities to the GntR/DNA complex. The release of GntR leads to transcription of the genes. The polypeptide is HTH-type transcriptional regulator GntR (Pseudomonas aeruginosa (strain ATCC 15692 / DSM 22644 / CIP 104116 / JCM 14847 / LMG 12228 / 1C / PRS 101 / PAO1)).